The primary structure comprises 175 residues: uncharacterized protein (175 aa).

Helical transmembrane passes span 21-41 and 50-70; these read IVLDFPSFLVGCVFTTMMGPI and LVGLITVCKFLVIIGSIVFVI.

The protein localises to the membrane. This is an uncharacterized protein from Saccharomyces cerevisiae (strain ATCC 204508 / S288c) (Baker's yeast).